We begin with the raw amino-acid sequence, 84 residues long: Kappa-scoloptoxin(11)-Ssm3a (84 aa).

Positions 1–16 (MSWMFYSFIVFTLAIK) are cleaved as a signal peptide.

It belongs to the scoloptoxin-11 family. Contains 2 disulfide bonds. Expressed by the venom gland.

Its subcellular location is the secreted. In terms of biological role, inhibits voltage-gated potassium channel currents in DRG neurons. 200 nM of the toxin inhibits current amplitude by only 25% and even at concentrations up to 5 uM, the toxin does not inhibit all potassium currents. In vivo, insects injected with this toxin showed signs of neurotoxicity including twitching, paralysis, and body contraction. The sequence is that of Kappa-scoloptoxin(11)-Ssm3a from Scolopendra mutilans (Chinese red-headed centipede).